The sequence spans 327 residues: MTSGSPKITNLLTRVKRIIPPLLDTFHKGQAGRVGVFGGCQHYTGAPYYSSMSSMLFGSDQSHIFCEKEAANVIKSYSPDLIVHPFLREKDKAGPEDSVDKCFELIKPMMGRLHAIVIGPGLGRDEWMQEIMAKVIEYARKNDMPMVIDADGLWLIQQRPELVSGYHNVILTPNVIEFKRLCDKLDIKSDGPDACNQLAGKLNLLIIQKGQSDIISDGATAYACSVPGGLKRCGGQGDILTGILATFLAWRHAYLSKEWDTEGNMDAKECLFLAAFGASACTRWCSRLAFKECGRATQSTDLVRHVGKAYNALMEDEIPSVEEKIKD.

Positions 11–313 (LLTRVKRIIP…RHVGKAYNAL (303 aa)) constitute a YjeF C-terminal domain. Residues Gly-121 and 174–180 (NVIEFKR) each bind (6S)-NADPHX. ATP contacts are provided by residues 209–213 (KGQSD) and 228–237 (GGLKRCGGQG). A (6S)-NADPHX-binding site is contributed by Asp-238.

The protein belongs to the NnrD/CARKD family. The cofactor is Mg(2+).

The protein localises to the cytoplasm. The catalysed reaction is (6S)-NADHX + ATP = ADP + phosphate + NADH + H(+). The enzyme catalyses (6S)-NADPHX + ATP = ADP + phosphate + NADPH + H(+). Its function is as follows. Catalyzes the dehydration of the S-form of NAD(P)HX at the expense of ATP, which is converted to ADP. Together with NAD(P)HX epimerase, which catalyzes the epimerization of the S- and R-forms, the enzyme allows the repair of both epimers of NAD(P)HX, a damaged form of NAD(P)H that is a result of enzymatic or heat-dependent hydration. The chain is ATP-dependent (S)-NAD(P)H-hydrate dehydratase from Schizosaccharomyces pombe (strain 972 / ATCC 24843) (Fission yeast).